Here is a 371-residue protein sequence, read N- to C-terminus: Cytokine receptor-like factor 2 (371 aa).

Positions 1–22 (MGRLVLLWGAAVFLLGGWMALG) are cleaved as a signal peptide. Residues 23–231 (QGGAAEGVQI…PTPPKPKLSK (209 aa)) lie on the Extracellular side of the membrane. Asn-47 and Asn-55 each carry an N-linked (GlcNAc...) asparagine glycan. The cysteines at positions 71 and 84 are disulfide-linked. Residues Asn-101 and Asn-169 are each glycosylated (N-linked (GlcNAc...) asparagine). In terms of domain architecture, Fibronectin type-III spans 118–211 (KPSSPKHVRF…DWSEVTCWQR (94 aa)). Cys-180 and Cys-218 form a disulfide bridge. The WSXWS motif signature appears at 200–204 (PSDWS). Residues 232–252 (FILISSLAILLMVSLLLLSLW) traverse the membrane as a helical segment. Over 253 to 371 (KLWRVKKFLI…VMNDRSYVAL (119 aa)) the chain is Cytoplasmic. Residues 261–269 (LIPSVPDPK) carry the Box 1 motif motif. The segment covering 322-336 (ESPRMLDPQTEEKEA) has biased composition (basic and acidic residues). The disordered stretch occupies residues 322-347 (ESPRMLDPQTEEKEASGGSLQLPHQP).

The protein belongs to the type I cytokine receptor family. Type 5 subfamily. Heterodimer of CRLF2 and IL7R. Expressed in heart, skeletal muscle, kidney and adult and fetal liver. Primarily expressed in dendrites and monocytes. Weakly expressed in T-cells.

The protein resides in the cell membrane. It localises to the secreted. Its function is as follows. Receptor for thymic stromal lymphopoietin (TSLP). Forms a functional complex with TSLP and IL7R which is capable of stimulating cell proliferation through activation of STAT3 and STAT5. Also activates JAK2. Implicated in the development of the hematopoietic system. The sequence is that of Cytokine receptor-like factor 2 (CRLF2) from Homo sapiens (Human).